The primary structure comprises 146 residues: Snaclec coagulation factor X-activating enzyme light chain 1 (146 aa).

The signal sequence occupies residues 1–23 (MGRFISVSFGCLVVFLSLSGTEA). Cys-27 and Cys-38 form a disulfide bridge. The region spanning 34-145 (YEQHCYKGFN…CNFIAPVVCK (112 aa)) is the C-type lectin domain. Asn-47 is a glycosylation site (N-linked (GlcNAc...) (complex) asparagine). 2 disulfide bridges follow: Cys-55/Cys-144 and Cys-121/Cys-136.

This sequence belongs to the snaclec family. In terms of assembly, heterotrimer; disulfide-linked. The heterotrimer consists of 1 heavy chain (a metalloproteinase) and 2 light chains: LC1 and LC2. N-glycosylated; probably required for conformation. Removal of easily accessible sugars does not change its functional capacity, but removal of the core sugars with N-glycanase causes a virtually complete loss of enzyme activity, apparently as a result of major conformational changes in the molecule. Not O-glycosylated. Expressed by the venom gland.

It localises to the secreted. Its function is as follows. Regulatory subunit of the blood coagulation factor X- and IX-activating enzyme. The enzyme activates coagulation factor X (F10) by cleaving the Arg-Ile bond and is also able to activate coagulation factor IX (F9) and protein S (PROS1) by specific cleavage of Arg-Ile and Arg-Val bonds. May serve as an exosite by which the enzyme recognizes and binds to the Gla domain of factor X (F10) and factor IX (F9) in a calcium-dependent manner. The chain is Snaclec coagulation factor X-activating enzyme light chain 1 (LC1) from Daboia siamensis (Eastern Russel's viper).